The sequence spans 475 residues: Glycogen synthase (475 aa).

Lysine 15 contacts ADP-alpha-D-glucose.

Belongs to the glycosyltransferase 1 family. Bacterial/plant glycogen synthase subfamily.

It carries out the reaction [(1-&gt;4)-alpha-D-glucosyl](n) + ADP-alpha-D-glucose = [(1-&gt;4)-alpha-D-glucosyl](n+1) + ADP + H(+). Its pathway is glycan biosynthesis; glycogen biosynthesis. Synthesizes alpha-1,4-glucan chains using ADP-glucose. The polypeptide is Glycogen synthase (Chlamydia felis (strain Fe/C-56) (Chlamydophila felis)).